The following is a 423-amino-acid chain: Cyclin-dependent kinase 14 (423 aa).

The disordered stretch occupies residues 62-85 (VGKESPKVRRHSSPSSPTSPKFGK). The region spanning 89–373 (YEKLEKLGEG…AQAALNHDYF (285 aa)) is the Protein kinase domain. ATP is bound by residues 95-103 (LGEGSYATV) and lysine 118. The active-site Proton acceptor is aspartate 210.

The protein belongs to the protein kinase superfamily. CMGC Ser/Thr protein kinase family. CDC2/CDKX subfamily. In terms of assembly, interacts with ccny; ccny mediates its recruitment to the plasma membrane and promotes phosphorylation of lrp6.

It localises to the cell membrane. It catalyses the reaction L-seryl-[protein] + ATP = O-phospho-L-seryl-[protein] + ADP + H(+). The catalysed reaction is L-threonyl-[protein] + ATP = O-phospho-L-threonyl-[protein] + ADP + H(+). Serine/threonine-protein kinase involved in the control of the eukaryotic cell cycle, whose activity is controlled by an associated cyclin. Acts as a cell-cycle regulator of Wnt signaling pathway during G2/M phase by mediating the phosphorylation of lrp6, leading to the activation of the Wnt signaling pathway. This is Cyclin-dependent kinase 14 (cdk14) from Xenopus tropicalis (Western clawed frog).